A 331-amino-acid chain; its full sequence is Phosphoribosylformylglycinamidine cyclo-ligase (331 aa).

Belongs to the AIR synthase family.

The protein resides in the cytoplasm. The enzyme catalyses 2-formamido-N(1)-(5-O-phospho-beta-D-ribosyl)acetamidine + ATP = 5-amino-1-(5-phospho-beta-D-ribosyl)imidazole + ADP + phosphate + H(+). The protein operates within purine metabolism; IMP biosynthesis via de novo pathway; 5-amino-1-(5-phospho-D-ribosyl)imidazole from N(2)-formyl-N(1)-(5-phospho-D-ribosyl)glycinamide: step 2/2. In Clostridium botulinum (strain 657 / Type Ba4), this protein is Phosphoribosylformylglycinamidine cyclo-ligase.